The sequence spans 149 residues: Putative pre-16S rRNA nuclease (149 aa).

Belongs to the YqgF nuclease family.

The protein localises to the cytoplasm. Could be a nuclease involved in processing of the 5'-end of pre-16S rRNA. The chain is Putative pre-16S rRNA nuclease from Burkholderia ambifaria (strain MC40-6).